Here is a 591-residue protein sequence, read N- to C-terminus: MNKISLPKIGIRPVIDGRRMGVRESLEEQTMNMAKATAALLTEKLRHACGAAVECVISDTCIAGMAEAAACEEKFSSQNVGLTITVTPCWCYGSETIDMDPTRPKAIWGFNGTERPGAVYLAAALAAHSQKGIPAFSIYGHDVQDADDTSIPADVEEKLLRFARAGLAVASMKGKSYLSLGGVSMGIAGSIVDHNFFESWLGMKVQAVDMTELRRRIDQKIYDEAELEMALAWADKNFRYGEDENNKQYQRNAEQSRAVLRESLLMAMCIRDMMQGNSKLADIGRVEESLGYNAIAAGFQGQRHWTDQYPNGDTAEAILNSSFDWNGVREPFVVATENDSLNGVAMLMGHQLTGTAQVFADVRTYWSPEAIERVTGHKLDGLAEHGIIHLINSGSAALDGSCKQRDSEGNPTMKPHWEISQQEADACLAATEWCPAIHEYFRGGGYSSRFLTEGGVPFTMTRVNIIKGLGPVLQIAEGWSVELPKDVHDILNKRTNSTWPTTWFAPRLTGKGPFTDVYSVMANWGANHGVLTIGHVGADFITLASMLRIPVCMHNVEETKVYRPSAWAAHGMDIEGQDYRACQNYGPLYKR.

Active-site proton acceptor residues include glutamate 337 and aspartate 361. Residues glutamate 337, aspartate 361, and histidine 528 each contribute to the Mn(2+) site.

Belongs to the L-fucose isomerase family. Homohexamer. Requires Mn(2+) as cofactor.

The protein resides in the cytoplasm. The catalysed reaction is L-fucose = L-fuculose. It participates in carbohydrate degradation; L-fucose degradation; L-lactaldehyde and glycerone phosphate from L-fucose: step 1/3. In terms of biological role, converts the aldose L-fucose into the corresponding ketose L-fuculose. The polypeptide is L-fucose isomerase (Escherichia coli O157:H7 (strain EC4115 / EHEC)).